Reading from the N-terminus, the 693-residue chain is Elongation factor G (693 aa).

In terms of domain architecture, tr-type G spans 8–283 (PQQRNIGIMA…AVVEYLPSPV (276 aa)). Residues 17–24 (AHIDAGKT), 81–85 (DTPGH), and 135–138 (NKMD) each bind GTP.

This sequence belongs to the TRAFAC class translation factor GTPase superfamily. Classic translation factor GTPase family. EF-G/EF-2 subfamily.

It localises to the cytoplasm. Its function is as follows. Catalyzes the GTP-dependent ribosomal translocation step during translation elongation. During this step, the ribosome changes from the pre-translocational (PRE) to the post-translocational (POST) state as the newly formed A-site-bound peptidyl-tRNA and P-site-bound deacylated tRNA move to the P and E sites, respectively. Catalyzes the coordinated movement of the two tRNA molecules, the mRNA and conformational changes in the ribosome. The protein is Elongation factor G of Oleidesulfovibrio alaskensis (strain ATCC BAA-1058 / DSM 17464 / G20) (Desulfovibrio alaskensis).